Here is a 160-residue protein sequence, read N- to C-terminus: Cyclic pyranopterin monophosphate synthase (160 aa).

Residues 73–75 (LCH) and 110–111 (ME) each bind substrate. Asp-125 is a catalytic residue.

The protein belongs to the MoaC family. As to quaternary structure, homohexamer; trimer of dimers.

The catalysed reaction is (8S)-3',8-cyclo-7,8-dihydroguanosine 5'-triphosphate = cyclic pyranopterin phosphate + diphosphate. It participates in cofactor biosynthesis; molybdopterin biosynthesis. In terms of biological role, catalyzes the conversion of (8S)-3',8-cyclo-7,8-dihydroguanosine 5'-triphosphate to cyclic pyranopterin monophosphate (cPMP). This chain is Cyclic pyranopterin monophosphate synthase, found in Pseudomonas aeruginosa (strain LESB58).